A 287-amino-acid chain; its full sequence is MVLSNVKIFRLKSHRAFRIGPMIKAVAGNLLVKRFYQPKLERIPPASLLLKQKIRLAQNGSTTSTENPISFSQTMSEIFSVLQPSAPDLDEDETSGLKRDHLLTERLNNGELGVIMNKFFNPSSTHNNQLIDTNILLQNFPKLSGNDLDLLDFAINEKMRGNWNDLKQDFIQLWYYKSFGFLGPRTQFVLTNSSPSVRSQFLKLPFIEYNWFLLQNNKNANILPADVQNVVKVFHLDDKRFTWKSIDPFSKAIISFVVFVSIYVWLDESAKQKTKELPAQKSTVISE.

The transit peptide at M1 to K24 directs the protein to the mitochondrion. Residues S250–L266 form a helical membrane-spanning segment.

It belongs to the GEP7 family.

The protein localises to the mitochondrion membrane. Its function is as follows. Involved in respiratory growth and required for cell survival in the absence of prohibitins or GEM1. This is Genetic interactor of prohibitin 7, mitochondrial (GEP7) from Saccharomyces cerevisiae (strain ATCC 204508 / S288c) (Baker's yeast).